Consider the following 109-residue polypeptide: Nucleoid-associated protein plu3840 (109 aa).

Disordered regions lie at residues 1–23 (MFGKGGLGNLMKQAQQMQDKMQK) and 89–109 (KEKMAGISSGMQLPPGFKMPF).

Belongs to the YbaB/EbfC family. As to quaternary structure, homodimer.

The protein resides in the cytoplasm. It localises to the nucleoid. Its function is as follows. Binds to DNA and alters its conformation. May be involved in regulation of gene expression, nucleoid organization and DNA protection. The protein is Nucleoid-associated protein plu3840 of Photorhabdus laumondii subsp. laumondii (strain DSM 15139 / CIP 105565 / TT01) (Photorhabdus luminescens subsp. laumondii).